Here is a 312-residue protein sequence, read N- to C-terminus: MGSNITSTSIIFLLTGVPGLEAFHTWISIPFCFLSVTALLGNSLILFATITQPSLHEPMYYFLSMLSATDLGLSISTLVTMLSIFWFNVREISFNACLSHMFFIKFFTVMESSVLLAMAFDRFVAVSNPLRYAMILTDSRIAQIGVASVIRGLLMLTPMVALLIRLSYCHSQVLHHSYCYHPDVMKLSCTDTRINSAVGLTAMFSTVGVDLLLILLSYVLIIRTVLSVASPEERKETFSTCVSHIVAFAIYYIPLISLSIVHRFGKQAPAYVHTMIANTYLLISPLMNPVIYSVKTKQIRRAVIKILHSKET.

Residues 1–26 are Extracellular-facing; it reads MGSNITSTSIIFLLTGVPGLEAFHTW. The helical transmembrane segment at 27 to 47 threads the bilayer; it reads ISIPFCFLSVTALLGNSLILF. At 48–66 the chain is on the cytoplasmic side; sequence ATITQPSLHEPMYYFLSML. Residues 67–87 traverse the membrane as a helical segment; that stretch reads SATDLGLSISTLVTMLSIFWF. At 88 to 99 the chain is on the extracellular side; sequence NVREISFNACLS. An intrachain disulfide couples Cys97 to Cys179. A helical transmembrane segment spans residues 100-120; that stretch reads HMFFIKFFTVMESSVLLAMAF. Residues 121 to 143 lie on the Cytoplasmic side of the membrane; the sequence is DRFVAVSNPLRYAMILTDSRIAQ. The helical transmembrane segment at 144 to 164 threads the bilayer; that stretch reads IGVASVIRGLLMLTPMVALLI. The Extracellular portion of the chain corresponds to 165–201; that stretch reads RLSYCHSQVLHHSYCYHPDVMKLSCTDTRINSAVGLT. The chain crosses the membrane as a helical span at residues 202–222; that stretch reads AMFSTVGVDLLLILLSYVLII. Residues 223–240 are Cytoplasmic-facing; that stretch reads RTVLSVASPEERKETFST. The helical transmembrane segment at 241-261 threads the bilayer; the sequence is CVSHIVAFAIYYIPLISLSIV. At 262-273 the chain is on the extracellular side; sequence HRFGKQAPAYVH. Residues 274 to 294 traverse the membrane as a helical segment; the sequence is TMIANTYLLISPLMNPVIYSV. The Cytoplasmic portion of the chain corresponds to 295-312; that stretch reads KTKQIRRAVIKILHSKET.

Belongs to the G-protein coupled receptor 1 family.

The protein localises to the membrane. Its function is as follows. Odorant receptor. The chain is Olfactory receptor OR51C1 from Homo sapiens (Human).